We begin with the raw amino-acid sequence, 316 residues long: Transaldolase (316 aa).

The Schiff-base intermediate with substrate role is filled by lysine 131.

The protein belongs to the transaldolase family. Type 1 subfamily. As to quaternary structure, homodimer.

The protein localises to the cytoplasm. The catalysed reaction is D-sedoheptulose 7-phosphate + D-glyceraldehyde 3-phosphate = D-erythrose 4-phosphate + beta-D-fructose 6-phosphate. Its pathway is carbohydrate degradation; pentose phosphate pathway; D-glyceraldehyde 3-phosphate and beta-D-fructose 6-phosphate from D-ribose 5-phosphate and D-xylulose 5-phosphate (non-oxidative stage): step 2/3. Functionally, transaldolase is important for the balance of metabolites in the pentose-phosphate pathway. This chain is Transaldolase, found in Buchnera aphidicola subsp. Acyrthosiphon pisum (strain 5A).